Reading from the N-terminus, the 1338-residue chain is Centrosomal P4.1-associated protein (1338 aa).

Disordered stretches follow at residues 78 to 99 (QKLESNSPYKPQSDKSETHTGF) and 190 to 211 (GLSLLPDDQSQKHRSPGNTTTG). Phosphoserine is present on residues Ser-260 and Ser-317. The segment at 320–395 (VANIEERPIK…FTNAKSKFQK (76 aa)) is alpha/beta-tubulin binding. Disordered stretches follow at residues 387 to 415 (TNAKSKFQKGKESKLVTNQSTSEDQPLFK), 437 to 480 (PILK…QTGK), and 522 to 552 (QGKDRLPLSTGPASRLAAKSPIRETMKESES). Over residues 401–410 (LVTNQSTSED) the composition is skewed to polar residues. Ser-541 is modified (phosphoserine). The segment covering 542–551 (PIRETMKESE) has biased composition (basic and acidic residues). A phosphoserine; by PLK2 mark is found at Ser-590 and Ser-596. Disordered stretches follow at residues 612–790 (HRMS…LSMS), 846–903 (VKRG…DNAR), and 1088–1158 (TQVE…HPDG). The span at 636–651 (NRSEDLDHTAREKESE) shows a compositional bias: basic and acidic residues. The segment covering 680–690 (QKSTSENQTEW) has biased composition (polar residues). A compositionally biased stretch (basic and acidic residues) spans 718-765 (STEDRERGISSREDSPQVCDDKGPFKDTRTQEDKRRDVDLDLSDKDYS). Ser-760 carries the post-translational modification Phosphoserine. Over residues 781 to 790 (PSRSSSLSMS) the composition is skewed to low complexity. The interval 896-1338 (QPPGDNARSQ…EGNVLMDTEL (443 aa)) is interaction with STIL.

The protein belongs to the TCP10 family. As to quaternary structure, forms homodimers. Associates with microtubules plus ends; binds to beta-tubulin subunits exposed on microtubule outer surface at its distal tip; also associates with microtubule lattice. Associated with the gamma-tubulin complex. Interacts with the head domain of EPB41. Interacts with LYST. Interacts with CEP152 (via C-terminus). Interacts with STIL. Forms a complex with STIL and SASS6. Post-translationally, phosphorylation at Ser-590 and Ser-596 by PLK2 is required for procentriole formation and centriole elongation. Phosphorylation by PLK2 oscillates during the cell cycle: it increases at G1/S transition and decreases during the exit from mitosis. Phosphorylation at Ser-596 is also mediated by PLK4 but is not a critical step in PLK4 function in procentriole assembly.

It is found in the cytoplasm. Its subcellular location is the cytoskeleton. It localises to the microtubule organizing center. The protein localises to the centrosome. The protein resides in the centriole. Plays an important role in cell division and centrosome function by participating in centriole duplication. Inhibits microtubule nucleation from the centrosome. Involved in the regulation of slow processive growth of centriolar microtubules. Acts as microtubule plus-end tracking protein that stabilizes centriolar microtubules and inhibits microtubule polymerization and extension from the distal ends of centrioles. Required for centriole elongation and for STIL-mediated centriole amplification. Required for the recruitment of CEP295 to the proximal end of new-born centrioles at the centriolar microtubule wall during early S phase in a PLK4-dependent manner. May be involved in the control of centriolar-microtubule growth by acting as a regulator of tubulin release. This Pan troglodytes (Chimpanzee) protein is Centrosomal P4.1-associated protein (CPAP).